The primary structure comprises 143 residues: Putative pre-16S rRNA nuclease (143 aa).

Belongs to the YqgF nuclease family.

Its subcellular location is the cytoplasm. In terms of biological role, could be a nuclease involved in processing of the 5'-end of pre-16S rRNA. This is Putative pre-16S rRNA nuclease from Mesomycoplasma hyopneumoniae (strain 232) (Mycoplasma hyopneumoniae).